The following is a 601-amino-acid chain: Elongation factor 4 (601 aa).

The tr-type G domain occupies 7–189; that stretch reads ELIRNFSIIA…ALVTRLPPPK (183 aa). Residues 19–24 and 136–139 each bind GTP; these read DHGKST and NKID.

The protein belongs to the TRAFAC class translation factor GTPase superfamily. Classic translation factor GTPase family. LepA subfamily.

It localises to the cell inner membrane. The catalysed reaction is GTP + H2O = GDP + phosphate + H(+). Required for accurate and efficient protein synthesis under certain stress conditions. May act as a fidelity factor of the translation reaction, by catalyzing a one-codon backward translocation of tRNAs on improperly translocated ribosomes. Back-translocation proceeds from a post-translocation (POST) complex to a pre-translocation (PRE) complex, thus giving elongation factor G a second chance to translocate the tRNAs correctly. Binds to ribosomes in a GTP-dependent manner. This Acidiphilium cryptum (strain JF-5) protein is Elongation factor 4.